Consider the following 205-residue polypeptide: Probable GTP-binding protein EngB (205 aa).

An EngB-type G domain is found at 22–195 (NLPEVALVGR…LDLLDYFWNG (174 aa)). Residues 30 to 37 (GRSNVGKS), 57 to 61 (GKTQT), 75 to 78 (DLPG), 142 to 145 (TKAD), and 174 to 176 (FSA) contribute to the GTP site. Mg(2+)-binding residues include serine 37 and threonine 59.

It belongs to the TRAFAC class TrmE-Era-EngA-EngB-Septin-like GTPase superfamily. EngB GTPase family. Mg(2+) serves as cofactor.

In terms of biological role, necessary for normal cell division and for the maintenance of normal septation. This Heliobacterium modesticaldum (strain ATCC 51547 / Ice1) protein is Probable GTP-binding protein EngB.